Reading from the N-terminus, the 248-residue chain is Ribonuclease 3 (248 aa).

An RNase III domain is found at 16 to 145; sequence TEGLETSIGY…LLAAMYLDGG (130 aa). Mg(2+) is bound at residue glutamate 58. Aspartate 62 is an active-site residue. Asparagine 131 and glutamate 134 together coordinate Mg(2+). Residue glutamate 134 is part of the active site. Positions 172-241 constitute a DRBM domain; sequence DFKTDFQELA…ARQCLERLET (70 aa).

The protein belongs to the ribonuclease III family. As to quaternary structure, homodimer. Requires Mg(2+) as cofactor.

Its subcellular location is the cytoplasm. The catalysed reaction is Endonucleolytic cleavage to 5'-phosphomonoester.. In terms of biological role, digests double-stranded RNA. Involved in the processing of primary rRNA transcript to yield the immediate precursors to the large and small rRNAs (23S and 16S). Processes some mRNAs, and tRNAs when they are encoded in the rRNA operon. Processes pre-crRNA and tracrRNA of type II CRISPR loci if present in the organism. The chain is Ribonuclease 3 from Geobacter sulfurreducens (strain ATCC 51573 / DSM 12127 / PCA).